The following is a 181-amino-acid chain: ATP-dependent protease subunit HslV (181 aa).

T2 is a catalytic residue. Na(+) is bound by residues G157, C160, and T163.

This sequence belongs to the peptidase T1B family. HslV subfamily. In terms of assembly, a double ring-shaped homohexamer of HslV is capped on each side by a ring-shaped HslU homohexamer. The assembly of the HslU/HslV complex is dependent on binding of ATP.

Its subcellular location is the cytoplasm. The enzyme catalyses ATP-dependent cleavage of peptide bonds with broad specificity.. Allosterically activated by HslU binding. Protease subunit of a proteasome-like degradation complex believed to be a general protein degrading machinery. This chain is ATP-dependent protease subunit HslV, found in Hahella chejuensis (strain KCTC 2396).